The following is a 562-amino-acid chain: MTTTTTVKSDIEIAQEASMKKIQEIAADLNILEDELEPYGHYKGKLSLDIFKRLQDEKDGKVVLVTAINPTPAGEGKSTVTVGLGQAFNKIGKKTVIALREPSLGPTMGLKGGAAGGGFSQVVPMEDINLHFTGDIHAITTANNALAAFIDNHIQQGNTLGIDTRKIVWKRCVDLNDRALRNVVIGLGGPVQGVPREDGFDITVASEIMAVFCLATDIQDLKARLSRIVVAYNFANQPVTVKDLGVEGALTLLLKDALKPNLVQTLENTPAIIHGGPFANIAHGCNSVIATTMAAKLGDYVITEAGFGADLGAEKFLDIKARAAGIKPEAVVIVATIRALKMHGGVAKDQLKEENVDALAKGMENLQKHVETIQSFGVPFVIAINKFITDTDAEVTYLQEWCNERGYAVSLTEVWEKGGQGGVDLAEKVLKEIEKGENNYAPLYELELPLEEKIRTIAQKVYGAKDIEFAPKARKQLAQYEGEGWSNLPVCMAKTQYSLSDDATKLGRPSDFIVTIRELKPSIGAGFIVALTGTMLTMPGLPKQPAALQMDVNEDGKAVGLF.

Residue 71-78 (TPAGEGKS) coordinates ATP.

Belongs to the formate--tetrahydrofolate ligase family.

It carries out the reaction (6S)-5,6,7,8-tetrahydrofolate + formate + ATP = (6R)-10-formyltetrahydrofolate + ADP + phosphate. It participates in one-carbon metabolism; tetrahydrofolate interconversion. This is Formate--tetrahydrofolate ligase from Bacillus cereus (strain G9842).